Reading from the N-terminus, the 212-residue chain is Ribonuclease HII (212 aa).

Residues 20–209 (TCVVGVDEVG…VHNILYQEAS (190 aa)) form the RNase H type-2 domain. 3 residues coordinate a divalent metal cation: aspartate 26, glutamate 27, and aspartate 117.

Belongs to the RNase HII family. The cofactor is Mn(2+). It depends on Mg(2+) as a cofactor.

It is found in the cytoplasm. The catalysed reaction is Endonucleolytic cleavage to 5'-phosphomonoester.. In terms of biological role, endonuclease that specifically degrades the RNA of RNA-DNA hybrids. This chain is Ribonuclease HII, found in Cereibacter sphaeroides (strain ATCC 17023 / DSM 158 / JCM 6121 / CCUG 31486 / LMG 2827 / NBRC 12203 / NCIMB 8253 / ATH 2.4.1.) (Rhodobacter sphaeroides).